Reading from the N-terminus, the 583-residue chain is MTAQHNIVVIGGGGAGLRAAIAIAETNPHLDVAIVSKVYPMRSHTVSAEGGAAAVTGDDDSLDEHAHDTVSGGDWLCDQDAVEAFVAEAPKELVQLEHWGCPWSRKPDGRVAVRPFGGMKKLRTWFAADKTGFHLLHTLFQRLLTYSDVMRYDEWFATTLLVDDGRVCGLVAIELATGRIETILADAVILCTGGCGRVFPFTTNANIKTGDGMALAFRAGAPLKDMEFVQYHPTGLPFTGILITEAARAEGGWLLNKDGYRYLQDYDLGKPTPEPRLRSMELGPRDRLSQAFVHEHNKGRTVDTPYGPVVYLDLRHLGADLIDAKLPFVRELCRDYQHIDPVVELVPVRPVVHYMMGGVHTDINGATTLPGLYAAGETACVSINGANRLGSNSLPELLVFGARAGRAAADYAARHQKSDRGPSSAVRAQARTEALRLERELSRHGQGGERIADIRADMQATLESAAGIYRDGPTLTKAVEEIRVLQERFATAGIDDHSRTFNTELTALLELSGMLDVALAIVESGLRREESRGAHQRTDFPNRDDEHFLAHTLVHRESDGTLRVGYLPVTITRWPPGERVYGR.

Residues 11 to 15, 35 to 37, 43 to 51, 155 to 157, and Asp211 each bind FAD; these read GGGGA, VSK, SHTVSAEGG, and WFA. His44 bears the Tele-8alpha-FAD histidine mark. Active-site residues include His232 and Arg248. FAD contacts are provided by residues 353–354, Glu377, and 388–394; these read HY and RLGSNSL.

It belongs to the FAD-dependent oxidoreductase 2 family. FRD/SDH subfamily. Part of an enzyme complex containing four subunits: a flavoprotein (FrdA), an iron-sulfur protein (FrdB), and two hydrophobic anchor proteins (FrdC and FrdD). Requires FAD as cofactor.

The protein resides in the cell membrane. It catalyses the reaction a quinone + succinate = fumarate + a quinol. The enzyme catalyses a menaquinone + succinate = a menaquinol + fumarate. In Mycobacterium tuberculosis (strain CDC 1551 / Oshkosh), this protein is Fumarate reductase flavoprotein subunit (frdA).